The chain runs to 73 residues: Waprin-Phi2 (73 aa).

The N-terminal stretch at M1 to A21 is a signal peptide. In terms of domain architecture, WAP spans E22 to R72. 4 disulfide bridges follow: C29–C59, C42–C63, C46–C58, and C52–C68.

This sequence belongs to the venom waprin family. In terms of tissue distribution, expressed by the venom gland.

The protein localises to the secreted. Functionally, damages membranes of susceptible bacteria. Has no hemolytic activity. Not toxic to mice. Does not inhibit the proteinases elastase and cathepsin G. This chain is Waprin-Phi2, found in Philodryas olfersii (Green snake).